The primary structure comprises 393 residues: Stearoyl-[acyl-carrier-protein] 9-desaturase, chloroplastic (393 aa).

Residues 1–31 (MASMVAFRPEAFLCFSPPKTTRSTRSPRISM) constitute a chloroplast transit peptide. E135, E173, H176, E226, E259, and H262 together coordinate Fe cation.

It belongs to the fatty acid desaturase type 2 family. In terms of assembly, homodimer. Fe(2+) serves as cofactor.

It is found in the plastid. It localises to the chloroplast. It carries out the reaction octadecanoyl-[ACP] + 2 reduced [2Fe-2S]-[ferredoxin] + O2 + 2 H(+) = (9Z)-octadecenoyl-[ACP] + 2 oxidized [2Fe-2S]-[ferredoxin] + 2 H2O. It participates in lipid metabolism; fatty acid metabolism. Functionally, converts stearoyl-ACP to oleoyl-ACP by introduction of a cis double bond between carbons 9 and 10 of the acyl chain. This Elaeis guineensis var. tenera (Oil palm) protein is Stearoyl-[acyl-carrier-protein] 9-desaturase, chloroplastic.